The sequence spans 226 residues: Clarin-3 (226 aa).

The chain crosses the membrane as a helical span at residues 8–28 (LMFLSGFLTSLGSVVVICSIL). 2 N-linked (GlcNAc...) asparagine glycosylation sites follow: N46 and N83. 3 consecutive transmembrane segments (helical) span residues 92-112 (VVII…MFTF), 128-148 (GVYT…VLFV), and 181-201 (FWLI…IIFY).

It belongs to the clarin family.

It is found in the membrane. The chain is Clarin-3 (Clrn3) from Rattus norvegicus (Rat).